We begin with the raw amino-acid sequence, 1004 residues long: Hyaluronate lyase HylB (1004 aa).

An N-terminal signal peptide occupies residues 1–29 (MKNRKIWVMLVGLFTALTNGFMGTTLTFA). Residues H468, Y477, and R531 contribute to the active site.

Belongs to the polysaccharide lyase 8 family.

The protein localises to the secreted. It carries out the reaction [hyaluronan](n) = n 3-(4-deoxy-beta-D-gluc-4-enuronosyl)-N-acetyl-D-glucosamine + H2O. It catalyses the reaction Eliminative degradation of polysaccharides containing 1,4-beta-D-hexosaminyl and 1,3-beta-D-glucuronosyl linkages to disaccharides containing 4-deoxy-beta-D-gluc-4-enuronosyl groups.. Functionally, degrades hyaluronic acid (HA) and chondroitin sulfate (CS) A in vitro. Is not active against heparin sodium salt (HS). Involved in the pathogenesis of vancomycin-resistant E.faecalis infections. Contributes to attenuation of the lipopolysaccharide (LPS)-mediated nuclear factor (NF)-kappa-B activation assayed in the mouse RAW-Blue reporter macrophages. The protein is Hyaluronate lyase HylB of Enterococcus faecalis (strain ATCC 700802 / V583).